The chain runs to 604 residues: Zinc finger protein chinmo (604 aa).

Residues 32-98 (ADVILSCDGV…MYKGEVHVSQ (67 aa)) enclose the BTB domain. 4 disordered regions span residues 122–155 (RLAA…SGGS), 291–310 (CDSL…GYTH), 330–437 (RSPY…DEST), and 450–470 (NLKY…TPNT). Low complexity predominate over residues 364–374 (PSSSASSTAPT). Residues 384–409 (ASPQSSRYENHSPSTTAGNGNATSSL) show a composition bias toward polar residues. Residues 425-437 (ANDDDRELMDEST) are compositionally biased toward acidic residues. A compositionally biased stretch (low complexity) spans 461 to 470 (SNTSSTTPNT). 2 C2H2-type zinc fingers span residues 517–540 (LKCL…RQRH) and 545–568 (VPCP…AREH).

As to expression, broadly expressed in the developing larval central nervous system (at protein level). Expressed in the larval lymph gland and circulating hemocytes (at protein level). Expressed in all cell types of the adult testis stem cell niche but not detected in somatic cells of the adult ovary (at protein level). In the testis, expressed at high levels in cyst stem cells and early cyst cells and, at lower levels, in germline stem cells (at protein level).

The protein localises to the nucleus. Its function is as follows. Required for morphological differentiation of postmitotic neurons during postembryonic brain development. Ensures production of appropriate neuron subtypes within a lineage by preventing precocious generation of late neuronal types of that lineage. Acts as a downstream mediator of the transcriptional activator Stat92e and is required for the development of the eye-antennal disk which gives rise to the adult eye, antenna and head capsule, for transcriptional repression of the Notch receptor ligand Ser and for the self-renewal of cyst stem cells in the testis. In the adult testis, maintains the male identify of adult somatic cyst stem cells. Represses expression and alternative splicing of transformer pre-mRNA, resulting in the production of the male-specific isoform of transcription factor dsx which ensures male-specific transcription of target genes. Plays a role in actin nuclear localization through its involvement in repressing the expression of the kinase Cdi. This maintains the cofilin/actin-depolymerizing factor homolog tsr in its unphosphorylated state which is required for actin nuclear import. This Drosophila melanogaster (Fruit fly) protein is Zinc finger protein chinmo.